The chain runs to 352 residues: Ion-translocating oxidoreductase complex subunit D (352 aa).

Helical transmembrane passes span 20-40, 42-62, 69-91, and 123-143; these read IMLLVLIAALPGIAAQTWFFG, GTLFQIVLAAITALVAEAIVL, VASHLQDYSALLTGLLLAVSIPP, and PAMIGYVVLLISFPVQMTSWL. The residue at position 187 (threonine 187) is an FMN phosphoryl threonine. The next 5 helical transmembrane spans lie at 215-235, 242-262, 267-287, 301-321, and 322-342; these read LAGVGWQWVNLAWLVGGVFLL, WHIPVSFLLTLALCAALGWLF, LASPQLHLLSGATMLGAFFIL, LIFGALAGVLVWLIRSFGGYP, and DGVAFAVLLANITVPLIDYYT.

It belongs to the NqrB/RnfD family. In terms of assembly, the complex is composed of six subunits: RsxA, RsxB, RsxC, RsxD, RsxE and RsxG. FMN is required as a cofactor.

The protein localises to the cell inner membrane. In terms of biological role, part of a membrane-bound complex that couples electron transfer with translocation of ions across the membrane. Required to maintain the reduced state of SoxR. The chain is Ion-translocating oxidoreductase complex subunit D from Salmonella choleraesuis (strain SC-B67).